Consider the following 131-residue polypeptide: Small ribosomal subunit protein uS8 (131 aa).

Belongs to the universal ribosomal protein uS8 family. Part of the 30S ribosomal subunit. Contacts proteins S5 and S12.

In terms of biological role, one of the primary rRNA binding proteins, it binds directly to 16S rRNA central domain where it helps coordinate assembly of the platform of the 30S subunit. The sequence is that of Small ribosomal subunit protein uS8 from Azobacteroides pseudotrichonymphae genomovar. CFP2.